The following is a 448-amino-acid chain: Proline iminopeptidase aneH (448 aa).

Residues 64 to 191 (PWMLYLQGGP…VEVFIGGGPC (128 aa)) enclose the AB hydrolase-1 domain. Ser-164 serves as the catalytic Nucleophile. The active site involves Asp-397. His-425 (proton donor) is an active-site residue.

This sequence belongs to the peptidase S33 family. In terms of assembly, homooligomer.

The protein resides in the cytoplasm. The enzyme catalyses Release of N-terminal proline from a peptide.. It participates in secondary metabolite biosynthesis. In terms of biological role, proline iminopeptidase; part of the gene cluster that mediates the biosynthesis of aculenes, a unique type of norsesquiterpenes that contain a nordaucane skeleton linked to an L-proline moiety and are of mixed biosynthetic origin. The pathway begins with the synthesis of dauca-4,7-diene by the terpene cyclase aneC using farnesyl pyrophosphate (FPP) as substrate. The cytochrome P450 monooxygenase aneF then performs the initial oxidation at C-12 of dauca-4,7-diene to yield asperaculane D. Asperaculane D is substrate of the cytochrome P450 monooxygenase aneD for C-10 hydroxylation to yield asperaculane E. The cytochrome P450 monooxygenase aneG then converts asperaculane E into aculene D via C-2 oxidation. The monomodular nonribosomal peptide synthtase aneB adenylates L-proline and the thiohydrolase aneE transfers this activated L-proline derivative to aculenes D and C to produce respectively aculenes B and A. The dioxygenase aneA converts aculene D into aculene C, and aculene B into aculene A by introducing the 5,6-alkene moiety. Asperculanes A, B, C and F, as well as 14-prolyl asperculane C, might be shunt products of the pathway. In Aspergillus aculeatus (strain ATCC 16872 / CBS 172.66 / WB 5094), this protein is Proline iminopeptidase aneH.